The primary structure comprises 267 residues: Hydroxypyruvate/pyruvate aldolase Bphyt_5830 (267 aa).

Catalysis depends on H48, which acts as the Proton acceptor. The a divalent metal cation site is built by E152 and D178.

It belongs to the HpcH/HpaI aldolase family. The cofactor is a divalent metal cation.

The catalysed reaction is D-glyceraldehyde + 3-hydroxypyruvate = 2-dehydro-D-galactonate. It catalyses the reaction D-glyceraldehyde + 3-hydroxypyruvate = (3R,4S,5R)-3,4,5,6-tetrahydroxy-2-oxohexanoate. The enzyme catalyses D-glyceraldehyde + pyruvate = 2-dehydro-3-deoxy-L-galactonate. Aldolase which can catalyze in vitro the aldolisation reaction between hydroxypyruvate (HPA) or pyruvate (PA) and D-glyceraldehyde (D-GA). The condensation of hydroxypyruvate and D-glyceraldehyde produces 2-dehydro-D-galactonate as the major product and (3R,4S,5R)-3,4,5,6-tetrahydroxy-2-oxohexanoate. The condensation of pyruvate and D-glyceraldehyde produces 2-dehydro-3-deoxy-L-galactonate. This chain is Hydroxypyruvate/pyruvate aldolase Bphyt_5830, found in Paraburkholderia phytofirmans (strain DSM 17436 / LMG 22146 / PsJN) (Burkholderia phytofirmans).